The chain runs to 801 residues: Fibroblast growth factor receptor 3 (801 aa).

The signal sequence occupies residues 1 to 20; the sequence is MVVPACVLVFCVAVVAGATS. Topologically, residues 21–369 are extracellular; sequence EPPGPEQRVV…TDEAGSVYAG (349 aa). In terms of domain architecture, Ig-like C2-type 1 spans 22–124; it reads PPGPEQRVVR…VLCHFSVRVT (103 aa). The cysteines at positions 59 and 107 are disulfide-linked. N96 carries an N-linked (GlcNAc...) asparagine glycan. The disordered stretch occupies residues 125–146; sequence DAPSSGDDEDGEDVAEDTGAPY. The span at 130-140 shows a compositional bias: acidic residues; that stretch reads GDDEDGEDVAE. Ig-like C2-type domains are found at residues 145-238 and 247-349; these read PYWT…YTLD and PILQ…AWLV. C170 and C222 are disulfide-bonded. N-linked (GlcNAc...) asparagine glycosylation is found at N219, N256, N288, N309, and N322. A disulfide bridge links C269 with C333. The chain crosses the membrane as a helical span at residues 370-390; that stretch reads VLSYGVVFFLFILVVAAVILC. The Cytoplasmic segment spans residues 391–801; the sequence is RLRSPPKKGL…GPPSNGGPRT (411 aa). A phosphoserine mark is found at S438 and S439. Residues 466 to 756 form the Protein kinase domain; sequence LTLGKPLGEG…LTVTSTDEYL (291 aa). ATP-binding positions include 472 to 480 and K502; that span reads LGEGCFGQV. D611 acts as the Proton acceptor in catalysis. Phosphotyrosine; by autocatalysis occurs at positions 641, 642, 719, and 755. Residues 762–801 are disordered; that stretch reads FEQYSPGGQDTPSSSSSGDDSVFTHDLLPPGPPSNGGPRT. Over residues 766 to 782 the composition is skewed to low complexity; the sequence is SPGGQDTPSSSSSGDDS. Pro residues predominate over residues 790–801; it reads PPGPPSNGGPRT.

The protein belongs to the protein kinase superfamily. Tyr protein kinase family. Fibroblast growth factor receptor subfamily. Monomer. Homodimer after ligand binding. Interacts with FGF1, FGF2, FGF4, FGF6; FGF8, FGF9, FGF10, FGF17, FGF18, FGF19, FGF20 and FGF23 (in vitro). Interacts with KLB. Affinity for fibroblast growth factors (FGFs) is increased by heparan sulfate glycosaminoglycans that function as coreceptors. Likewise, KLB increases the affinity for FGF19 and FGF21. Interacts with PIK3R1, PLCG1, SOCS1 and SOCS3. Autophosphorylated. Binding of FGF family members together with heparan sulfate proteoglycan or heparin promotes receptor dimerization and autophosphorylation on tyrosine residues. Autophosphorylation occurs in trans between the two FGFR molecules present in the dimer. Phosphorylation at Tyr-719 is essential for stimulation of cell proliferation and activation of PIK3R1, STAT1 and MAP kinase signaling. Phosphorylation at Tyr-755 is required for interaction with PIK3R1 and PLCG1. In terms of processing, ubiquitinated. Is rapidly ubiquitinated after ligand binding and autophosphorylation, leading to receptor internalization and degradation. Subject to both proteasomal and lysosomal degradation. Post-translationally, N-glycosylated in the endoplasmic reticulum. The N-glycan chains undergo further maturation to an Endo H-resistant form in the Golgi apparatus. In terms of tissue distribution, in embryo, expressed in heart, lung, kidney, skin, head and liver but not in muscle. In adult, highest levels in brain. Also expressed in liver, lung, kidney, testis, ovary and uterus. Very low levels in heart, thymus, spleen and muscle.

The protein resides in the cell membrane. It localises to the cytoplasmic vesicle. Its subcellular location is the endoplasmic reticulum. The enzyme catalyses L-tyrosyl-[protein] + ATP = O-phospho-L-tyrosyl-[protein] + ADP + H(+). Its activity is regulated as follows. Present in an inactive conformation in the absence of bound ligand. Ligand binding leads to dimerization and activation by autophosphorylation on tyrosine residues. In terms of biological role, tyrosine-protein kinase that acts as a cell-surface receptor for fibroblast growth factors and plays an essential role in the regulation of cell proliferation, differentiation and apoptosis. Plays an essential role in the regulation of chondrocyte differentiation, proliferation and apoptosis, and is required for normal skeleton development. Regulates both osteogenesis and postnatal bone mineralization by osteoblasts. Promotes apoptosis in chondrocytes, but can also promote cancer cell proliferation. Required for normal development of the inner ear. Phosphorylates PLCG1, CBL and FRS2. Ligand binding leads to the activation of several signaling cascades. Activation of PLCG1 leads to the production of the cellular signaling molecules diacylglycerol and inositol 1,4,5-trisphosphate. Phosphorylation of FRS2 triggers recruitment of GRB2, GAB1, PIK3R1 and SOS1, and mediates activation of RAS, MAPK1/ERK2, MAPK3/ERK1 and the MAP kinase signaling pathway, as well as of the AKT1 signaling pathway. Plays a role in the regulation of vitamin D metabolism. Mutations that lead to constitutive kinase activation or impair normal FGFR3 maturation, internalization and degradation lead to aberrant signaling. Over-expressed or constitutively activated FGFR3 promotes activation of STAT1, STAT5A and STAT5B. Plays a role in postnatal lung development. This Mus musculus (Mouse) protein is Fibroblast growth factor receptor 3 (Fgfr3).